Reading from the N-terminus, the 313-residue chain is Fructose-1,6-bisphosphatase class 1 (313 aa).

Mg(2+) is bound by residues Glu91, Asp112, Leu114, and Asp115. Residues Asp115–Ser118, Tyr223, and Lys254 contribute to the substrate site. Residue Glu260 coordinates Mg(2+).

It belongs to the FBPase class 1 family. As to quaternary structure, homotetramer. Mg(2+) is required as a cofactor.

It localises to the cytoplasm. The enzyme catalyses beta-D-fructose 1,6-bisphosphate + H2O = beta-D-fructose 6-phosphate + phosphate. Its pathway is carbohydrate biosynthesis; gluconeogenesis. This chain is Fructose-1,6-bisphosphatase class 1, found in Geobacter sulfurreducens (strain ATCC 51573 / DSM 12127 / PCA).